Here is a 372-residue protein sequence, read N- to C-terminus: NAD(P)H-quinone oxidoreductase subunit 1 (372 aa).

A run of 8 helical transmembrane segments spans residues 27 to 47 (IIWL…GVLV), 97 to 117 (ILFT…WLIV), 128 to 148 (VGIG…GLLM), 176 to 196 (LALS…IDIV), 204 to 224 (ILSW…ICAL), 266 to 286 (ILSA…PVPV), 308 to 328 (SIGI…AILL), and 347 to 367 (FLLP…LAFP).

This sequence belongs to the complex I subunit 1 family. As to quaternary structure, NDH-1 is composed of at least 11 different subunits.

It is found in the cellular thylakoid membrane. It catalyses the reaction a plastoquinone + NADH + (n+1) H(+)(in) = a plastoquinol + NAD(+) + n H(+)(out). The catalysed reaction is a plastoquinone + NADPH + (n+1) H(+)(in) = a plastoquinol + NADP(+) + n H(+)(out). Functionally, NDH-1 shuttles electrons from an unknown electron donor, via FMN and iron-sulfur (Fe-S) centers, to quinones in the respiratory and/or the photosynthetic chain. The immediate electron acceptor for the enzyme in this species is believed to be plastoquinone. Couples the redox reaction to proton translocation, and thus conserves the redox energy in a proton gradient. This is NAD(P)H-quinone oxidoreductase subunit 1 from Prochlorococcus marinus (strain AS9601).